The following is a 347-amino-acid chain: G-protein coupled receptor homolog U12 (347 aa).

The next 6 helical transmembrane spans lie at 36 to 56, 67 to 87, 103 to 124, 147 to 167, 194 to 214, and 236 to 256; these read GITL…MILY, FYVI…FFMT, LVYF…IIAT, IGIL…FVKT, IVFS…FYVI, and ILLL…ICEI. A disulfide bridge connects residues Cys-101 and Cys-176. The interval 321 to 347 is disordered; it reads QKRKDSDASEHDQNSKSKASVEKNQPL. The segment covering 322 to 341 has biased composition (basic and acidic residues); the sequence is KRKDSDASEHDQNSKSKASV.

The protein belongs to the G-protein coupled receptor 1 family.

It is found in the membrane. In terms of biological role, probable G-protein coupled receptor. This Homo sapiens (Human) protein is G-protein coupled receptor homolog U12 (U12).